The primary structure comprises 118 residues: Large ribosomal subunit protein bL19 (118 aa).

It belongs to the bacterial ribosomal protein bL19 family.

Its function is as follows. This protein is located at the 30S-50S ribosomal subunit interface and may play a role in the structure and function of the aminoacyl-tRNA binding site. The polypeptide is Large ribosomal subunit protein bL19 (rplS) (Helicobacter pylori (strain J99 / ATCC 700824) (Campylobacter pylori J99)).